We begin with the raw amino-acid sequence, 473 residues long: Adhesive plaque matrix protein 2 (473 aa).

The first 17 residues, 1–17 (MLFSFFLLLTCTQLCLG), serve as a signal peptide directing secretion. Y23, Y31, Y36, and Y43 each carry 3',4'-dihydroxyphenylalanine. EGF-like domains lie at 45 to 81 (PVNP…YNCN), 82 to 117 (LKNA…GRLC), 118 to 154 (EKNV…GPRC), 155 to 191 (EVHA…GPTC), 192 to 228 (QENA…GPEC), 229 to 265 (ERYV…GPTC), 266 to 301 (KVNV…GPTC), 302 to 340 (GENV…PTCE), 342 to 378 (KPNP…RHCT), 383 to 420 (KPNP…RHCT), and 425 to 461 (KKNP…RYCS). 33 cysteine pairs are disulfide-bonded: C49/C60, C54/C69, C71/C80, C86/C97, C91/C106, C108/C117, C122/C133, C127/C143, C145/C154, C159/C170, C164/C180, C182/C191, C196/C207, C201/C217, C219/C228, C233/C244, C238/C254, C256/C265, C270/C281, C275/C290, C292/C301, C306/C317, C311/C328, C330/C339, C346/C357, C351/C366, C368/C377, C387/C399, C393/C408, C410/C419, C429/C440, C434/C449, and C451/C460. The N-linked (GlcNAc...) asparagine glycan is linked to N93.

Post-translationally, contains L-DOPA (3',4'-dihydroxyphenylalanine). Produced by the byssal gland.

The protein localises to the secreted. Its function is as follows. Provides adhesiveness to the mussel's foot. Mussels produce one of the strongest water insoluble glues. The mussel's adhesive is a bundle of threads, called a byssus, formed by a fibrous collagenous core coated with adhesive proteins. This chain is Adhesive plaque matrix protein 2 (FP2), found in Mytilus galloprovincialis (Mediterranean mussel).